We begin with the raw amino-acid sequence, 169 residues long: Crossover junction endodeoxyribonuclease RuvC (169 aa).

Active-site residues include Asp11, Glu71, and Asp143. Mg(2+) is bound by residues Asp11, Glu71, and Asp143.

It belongs to the RuvC family. Homodimer which binds Holliday junction (HJ) DNA. The HJ becomes 2-fold symmetrical on binding to RuvC with unstacked arms; it has a different conformation from HJ DNA in complex with RuvA. In the full resolvosome a probable DNA-RuvA(4)-RuvB(12)-RuvC(2) complex forms which resolves the HJ. Mg(2+) serves as cofactor.

The protein resides in the cytoplasm. It catalyses the reaction Endonucleolytic cleavage at a junction such as a reciprocal single-stranded crossover between two homologous DNA duplexes (Holliday junction).. Functionally, the RuvA-RuvB-RuvC complex processes Holliday junction (HJ) DNA during genetic recombination and DNA repair. Endonuclease that resolves HJ intermediates. Cleaves cruciform DNA by making single-stranded nicks across the HJ at symmetrical positions within the homologous arms, yielding a 5'-phosphate and a 3'-hydroxyl group; requires a central core of homology in the junction. The consensus cleavage sequence is 5'-(A/T)TT(C/G)-3'. Cleavage occurs on the 3'-side of the TT dinucleotide at the point of strand exchange. HJ branch migration catalyzed by RuvA-RuvB allows RuvC to scan DNA until it finds its consensus sequence, where it cleaves and resolves the cruciform DNA. This chain is Crossover junction endodeoxyribonuclease RuvC, found in Rhizobium etli (strain CIAT 652).